The primary structure comprises 308 residues: Acetaldehyde dehydrogenase (308 aa).

14-17 is a binding site for NAD(+); sequence TGNI. Catalysis depends on Cys129, which acts as the Acyl-thioester intermediate. NAD(+) is bound by residues 160 to 168 and Asn280; that span reads SAGPGTRQN.

This sequence belongs to the acetaldehyde dehydrogenase family.

The enzyme catalyses acetaldehyde + NAD(+) + CoA = acetyl-CoA + NADH + H(+). In Thermomicrobium roseum (strain ATCC 27502 / DSM 5159 / P-2), this protein is Acetaldehyde dehydrogenase.